A 440-amino-acid polypeptide reads, in one-letter code: Protein disulfide-isomerase A6 (440 aa).

Residues 1-19 (MALLVLGLVSCTFFLAVNG) form the signal peptide. 2 Thioredoxin domains span residues 20-133 (LYSS…ALRQ) and 154-287 (SDSS…EDIA). Catalysis depends on nucleophile residues C55 and C58. C55 and C58 are oxidised to a cystine. The residue at position 129 (S129) is a Phosphoserine. Residues 141–161 (GRSGGYSSGKQGRSDSSSKKD) form a disordered region. Residues 152-161 (GRSDSSSKKD) are compositionally biased toward basic and acidic residues. S156 is subject to Phosphoserine; by FAM20C. Position 158 is a phosphoserine (S158). Catalysis depends on nucleophile residues C190 and C193. C190 and C193 are oxidised to a cystine. At S428 the chain carries Phosphoserine. A Prevents secretion from ER motif is present at residues 437-440 (KDEL).

The protein belongs to the protein disulfide isomerase family. As to quaternary structure, part of a large chaperone multiprotein complex comprising DNAJB11, HSP90B1, HSPA5, HYOU, PDIA2, PDIA4, PDIA6, PPIB, SDF2L1, UGGT1 and very small amounts of ERP29, but not, or at very low levels, CALR nor CANX. Interacts with MICA on the surface of tumor cells, leading to MICA disulfide bond reduction which is required for its release from tumor cells. Interacts with ITGB3 following platelet stimulation. Interacts with ERN1; the interaction is direct. Interacts with EIF2AK3. In terms of tissue distribution, expressed in platelets (at protein level).

It is found in the endoplasmic reticulum lumen. Its subcellular location is the cell membrane. The protein resides in the melanosome. It carries out the reaction Catalyzes the rearrangement of -S-S- bonds in proteins.. May function as a chaperone that inhibits aggregation of misfolded proteins. Negatively regulates the unfolded protein response (UPR) through binding to UPR sensors such as ERN1, which in turn inactivates ERN1 signaling. May also regulate the UPR via the EIF2AK3 UPR sensor. Plays a role in platelet aggregation and activation by agonists such as convulxin, collagen and thrombin. In Homo sapiens (Human), this protein is Protein disulfide-isomerase A6 (PDIA6).